A 115-amino-acid chain; its full sequence is Large ribosomal subunit protein bL19 (115 aa).

This sequence belongs to the bacterial ribosomal protein bL19 family.

Its function is as follows. This protein is located at the 30S-50S ribosomal subunit interface and may play a role in the structure and function of the aminoacyl-tRNA binding site. In Bacillus velezensis (strain DSM 23117 / BGSC 10A6 / LMG 26770 / FZB42) (Bacillus amyloliquefaciens subsp. plantarum), this protein is Large ribosomal subunit protein bL19.